The chain runs to 362 residues: Peptide chain release factor 1 (362 aa).

Position 237 is an N5-methylglutamine (Gln-237). A disordered region spans residues 279–305; it reads RLQQAEDEKRRSEEESSRRNLVASGDR. The segment covering 282–296 has biased composition (basic and acidic residues); the sequence is QAEDEKRRSEEESSR.

This sequence belongs to the prokaryotic/mitochondrial release factor family. In terms of processing, methylated by PrmC. Methylation increases the termination efficiency of RF1.

It is found in the cytoplasm. In terms of biological role, peptide chain release factor 1 directs the termination of translation in response to the peptide chain termination codons UAG and UAA. The chain is Peptide chain release factor 1 from Colwellia psychrerythraea (strain 34H / ATCC BAA-681) (Vibrio psychroerythus).